The sequence spans 74 residues: UPF0154 protein LVIS_1358 (74 aa).

Residues 4–24 (WIWILIVIVVGLACAAGGFYG) traverse the membrane as a helical segment.

This sequence belongs to the UPF0154 family.

The protein localises to the cell membrane. The protein is UPF0154 protein LVIS_1358 of Levilactobacillus brevis (strain ATCC 367 / BCRC 12310 / CIP 105137 / JCM 1170 / LMG 11437 / NCIMB 947 / NCTC 947) (Lactobacillus brevis).